The sequence spans 136 residues: Ribonuclease P protein component (136 aa).

The interval leucine 39–proline 59 is disordered.

Belongs to the RnpA family. As to quaternary structure, consists of a catalytic RNA component (M1 or rnpB) and a protein subunit.

The catalysed reaction is Endonucleolytic cleavage of RNA, removing 5'-extranucleotides from tRNA precursor.. RNaseP catalyzes the removal of the 5'-leader sequence from pre-tRNA to produce the mature 5'-terminus. It can also cleave other RNA substrates such as 4.5S RNA. The protein component plays an auxiliary but essential role in vivo by binding to the 5'-leader sequence and broadening the substrate specificity of the ribozyme. This chain is Ribonuclease P protein component, found in Salinispora tropica (strain ATCC BAA-916 / DSM 44818 / JCM 13857 / NBRC 105044 / CNB-440).